Consider the following 365-residue polypeptide: Putative glutamate--cysteine ligase 2-3 (365 aa).

This sequence belongs to the glutamate--cysteine ligase type 2 family. YbdK subfamily.

The catalysed reaction is L-cysteine + L-glutamate + ATP = gamma-L-glutamyl-L-cysteine + ADP + phosphate + H(+). ATP-dependent carboxylate-amine ligase which exhibits weak glutamate--cysteine ligase activity. The chain is Putative glutamate--cysteine ligase 2-3 from Mycolicibacterium smegmatis (strain ATCC 700084 / mc(2)155) (Mycobacterium smegmatis).